The following is a 146-amino-acid chain: MKIMVINGPNLNLLGIREKEIYGAKDFNQVIDYIKEEGKELGLEVNCFQSNIEGEIINFIHNAYFEKYDGIIINPGAYTHYSIAIYDALKGVEIPTVEVHLSNIHKREEFRHKSVTAPACIGQISGFGEYGYIMAMNALKNHIKSK.

Y22 serves as the catalytic Proton acceptor. Residues N74, H80, and D87 each coordinate substrate. The active-site Proton donor is the H100. Residues 101–102 (LS) and R111 each bind substrate.

This sequence belongs to the type-II 3-dehydroquinase family. In terms of assembly, homododecamer.

It catalyses the reaction 3-dehydroquinate = 3-dehydroshikimate + H2O. Its pathway is metabolic intermediate biosynthesis; chorismate biosynthesis; chorismate from D-erythrose 4-phosphate and phosphoenolpyruvate: step 3/7. Its function is as follows. Catalyzes a trans-dehydration via an enolate intermediate. The polypeptide is 3-dehydroquinate dehydratase (Clostridium perfringens (strain 13 / Type A)).